The following is a 351-amino-acid chain: MGFDLDVEKKKENRNIPQANNLKIKVIGVGGAGNNAINRMIEIGIHGVEFVAVNTDLQVLEASNADVKIQIGENITRGLGAGGRPEIGEQAALESEEKIREVLQDTHMVFITAGFGGGTGTGASPVIAKIAKEMGILTVAIVTTPFYFEGPERLKKAIEGLKKLRKHVDTLIKISNNKLMEELPRDVKIKDAFLKADETLHQGVKGISELITKRGYINLDFADIESVMKDAGAAILGIGVGKGEHRAREAAKKAMESKLIEHPVENASSIVFNITAPSNIRMEEVHEAAMIIRQNSSEDADVKFGLIFDDEVPDDEIRVIFIATRFPDEDKILFPEGDIPAIYRYGLEGLL.

Residues 31-35 (GAGNN), 118-120 (GTG), Glu149, Arg153, and Asp197 contribute to the GTP site.

It belongs to the FtsZ family. As to quaternary structure, homodimer. Polymerizes to form a dynamic ring structure in a strictly GTP-dependent manner. Interacts directly with several other division proteins. Interacts with FtsA.

Its subcellular location is the cytoplasm. In terms of biological role, essential cell division protein that forms a contractile ring structure (Z ring) at the future cell division site. The regulation of the ring assembly controls the timing and the location of cell division. One of the functions of the FtsZ ring is to recruit other cell division proteins to the septum to produce a new cell wall between the dividing cells. Binds GTP and shows GTPase activity. The sequence is that of Cell division protein FtsZ from Thermotoga maritima (strain ATCC 43589 / DSM 3109 / JCM 10099 / NBRC 100826 / MSB8).